Consider the following 113-residue polypeptide: MTITCSLSDKKCIPCEGGVPPLEKKEIDKLLSELQNEWIVNESGHLYKKYKFPDFMQPIEFANKIAALAEQEVHHPDLTISWGACIVEIWTHKIDGLTESDFILAAKIDLLQN.

The protein belongs to the pterin-4-alpha-carbinolamine dehydratase family.

The enzyme catalyses (4aS,6R)-4a-hydroxy-L-erythro-5,6,7,8-tetrahydrobiopterin = (6R)-L-erythro-6,7-dihydrobiopterin + H2O. This is Putative pterin-4-alpha-carbinolamine dehydratase from Rickettsia bellii (strain OSU 85-389).